Here is a 2548-residue protein sequence, read N- to C-terminus: Unconventional myosin-IXa (2548 aa).

Residues 14–112 (NEHTLRIYPG…YRFLLREKNL (99 aa)) enclose the Ras-associating domain. Residues 146 to 1016 (KDFDDLCSLP…ERQHLQDLLH (871 aa)) enclose the Myosin motor domain. The chain crosses the membrane as a helical span at residues 175 to 195 (IYTYVGSILIVINPFKFLPIY). Residue 239–246 (GESGSGKT) coordinates ATP. Ser-755 carries the phosphoserine modification. Residues 898–920 (LSKLMETLGQAEPYFVKCIRSNA) form an actin-binding region. 5 IQ domains span residues 1021–1041 (RRII…HFLH), 1042–1071 (LRQA…QKDA), 1074–1103 (MASA…AAIV), 1115–1144 (RHMA…KIIL), and 1138–1167 (QRKK…QRLR). A neck or regulatory domain region spans residues 1021–1162 (RRIILLQRWF…RARQRFKALK (142 aa)). The tail stretch occupies residues 1163-2511 (EQRLRETKPE…LKNVKNSPQK (1349 aa)). Basic and acidic residues predominate over residues 1223-1236 (SVDCLKESPNKQQE). A disordered region spans residues 1223–1250 (SVDCLKESPNKQQERAQSQSGVDLQEDV). Ser-1242 and Ser-1258 each carry phosphoserine. Residues 1264–1291 (QKKVGRAKRESRRMRELEQAIFSLELLK) adopt a coiled-coil conformation. Phosphoserine occurs at positions 1299 and 1317. A disordered region spans residues 1299–1386 (SPSEDRRWST…SNETSSAEHL (88 aa)). 2 stretches are compositionally biased toward low complexity: residues 1324-1337 (SESS…LSYE) and 1356-1366 (FPSPKISSSPK). Phosphoserine is present on Ser-1364. The span at 1372 to 1381 (NALSASNETS) shows a compositional bias: polar residues. Positions 1486-1532 (VLKKLEKLNTEKEERQKQLQQQNEKEMMEQIRQQTDILEKERKAFKT) form a coiled coil. The disordered stretch occupies residues 1804–1836 (YHPTPPLSPELPGSCRKEFKENKEPSPKAKRKR). A compositionally biased stretch (basic and acidic residues) spans 1818-1830 (CRKEFKENKEPSP). Residue Ser-1948 is modified to Phosphoserine. 2 Phorbol-ester/DAG-type zinc fingers span residues 1999-2048 (GHIF…TAKC) and 2068-2119 (LTSE…DAES). The region spanning 2063-2251 (VELSRLTSED…LIVVEQMNKY (189 aa)) is the Rho-GAP domain. Ser-2294 carries the post-translational modification Phosphoserine. The stretch at 2315-2358 (AAMETDITEQQQAAMQQEERVLTEQIENLQKEKEELTFEMLVLE) forms a coiled coil. Disordered regions lie at residues 2359-2383 (PRAS…ENLN) and 2401-2424 (SSLK…KQQD). Phosphoserine is present on Ser-2464. The disordered stretch occupies residues 2490-2531 (RGTFNPEKGKQKLKNVKNSPQKTKETPEGTVMSGRRKTVDPD).

Belongs to the TRAFAC class myosin-kinesin ATPase superfamily. Myosin family. Post-translationally, phosphorylated by ALPK1 following monosodium urate monohydrate (MSU)-induced inflammation. As to expression, found to be expressed in testis and placenta and at lower levels in all the examined tissues with the exception of liver. Isoform 5: Found in leukocytes but not in brain, retina or testis.

Its subcellular location is the membrane. It is found in the cytoplasm. It localises to the synapse. The protein resides in the cell projection. The protein localises to the growth cone. Its function is as follows. Myosins are actin-based motor molecules with ATPase activity. Unconventional myosins serve in intracellular movements. Regulates Rho by stimulating it's GTPase activity in neurons. Required for the regulation of neurite branching and motor neuron axon guidance. The polypeptide is Unconventional myosin-IXa (MYO9A) (Homo sapiens (Human)).